The following is a 242-amino-acid chain: Transcription factor bHLH100 (242 aa).

Residues Met61–Leu113 enclose the bHLH domain.

As to quaternary structure, homodimer. Expressed constitutively in roots, leaves, and stems.

It is found in the nucleus. In terms of biological role, plays a role in metal homeostasis. Confers tolerance to high zinc (Zn) and nickel (Ni). The chain is Transcription factor bHLH100 (BHLH100) from Arabidopsis thaliana (Mouse-ear cress).